The chain runs to 397 residues: Elongation factor Tu 1 (397 aa).

The tr-type G domain maps to 10–207 (KPHVNVGTIG…TLDSYIPEPV (198 aa)). The segment at 19-26 (GHVDHGKT) is G1. 19 to 26 (GHVDHGKT) is a GTP binding site. Mg(2+) is bound at residue Thr-26. A G2 region spans residues 60-64 (GITIN). Residues 81 to 84 (DCPG) are G3. GTP contacts are provided by residues 81–85 (DCPGH) and 136–139 (NKAD). The G4 stretch occupies residues 136 to 139 (NKAD). The interval 174 to 176 (SAL) is G5.

It belongs to the TRAFAC class translation factor GTPase superfamily. Classic translation factor GTPase family. EF-Tu/EF-1A subfamily. In terms of assembly, monomer.

The protein localises to the cytoplasm. It catalyses the reaction GTP + H2O = GDP + phosphate + H(+). GTP hydrolase that promotes the GTP-dependent binding of aminoacyl-tRNA to the A-site of ribosomes during protein biosynthesis. The chain is Elongation factor Tu 1 from Stutzerimonas stutzeri (strain A1501) (Pseudomonas stutzeri).